A 170-amino-acid chain; its full sequence is Adenine phosphoribosyltransferase (170 aa).

It belongs to the purine/pyrimidine phosphoribosyltransferase family. Homodimer.

The protein resides in the cytoplasm. The enzyme catalyses AMP + diphosphate = 5-phospho-alpha-D-ribose 1-diphosphate + adenine. The protein operates within purine metabolism; AMP biosynthesis via salvage pathway; AMP from adenine: step 1/1. Its function is as follows. Catalyzes a salvage reaction resulting in the formation of AMP, that is energically less costly than de novo synthesis. This chain is Adenine phosphoribosyltransferase, found in Kosmotoga olearia (strain ATCC BAA-1733 / DSM 21960 / TBF 19.5.1).